Here is a 341-residue protein sequence, read N- to C-terminus: MSKKVLLGMSGGVDSTVSAMFLKEEGYEVEGLYMKLHSNPGYHEIHEARARKAADFLGIKLHVIDLQEIFNEKVFKPFVDTYAKGKTPNPCALCNRSLKFGEMLKFAYKIGADFVATGHYIKTDGKYFYEADDDTKDQSYFLFYVNKEILPRLLFPLGDRKKSEIKELAASINGLATFASQRESSEICFVETTYTDLLQDYVEVDKVGEVLDTSGKVVGEHKGYMHYTIGKRRGFSVNGAHDPHYVVSINPDKNQIIVGKKEDLACNSVVLNNLNLYSDEKSFDTTVKLRYRTKAIPCHVDIIDDKAHVTLKESVFGVAVGQAAVFYDGNKLLGGGWIEDN.

Residues 8–15 (GMSGGVDS) and Met-34 each bind ATP. Cys-94 acts as the Nucleophile in catalysis. Cys-94 and Cys-188 are oxidised to a cystine. Gly-118 is an ATP binding site. The tract at residues 136–138 (KDQ) is interaction with tRNA. The active-site Cysteine persulfide intermediate is Cys-188. Residues 290–291 (RY) are interaction with tRNA.

Belongs to the MnmA/TRMU family.

It is found in the cytoplasm. It catalyses the reaction S-sulfanyl-L-cysteinyl-[protein] + uridine(34) in tRNA + AH2 + ATP = 2-thiouridine(34) in tRNA + L-cysteinyl-[protein] + A + AMP + diphosphate + H(+). Catalyzes the 2-thiolation of uridine at the wobble position (U34) of tRNA, leading to the formation of s(2)U34. This Sulfurimonas denitrificans (strain ATCC 33889 / DSM 1251) (Thiomicrospira denitrificans (strain ATCC 33889 / DSM 1251)) protein is tRNA-specific 2-thiouridylase MnmA.